A 925-amino-acid polypeptide reads, in one-letter code: Proto-oncogene DBL (925 aa).

Residues 1–88 enclose the CRAL-TRIO domain; it reads MAEANPRRGK…ELGGTLQYCH (88 aa). The stretch at 221–322 is one Spectrin repeat; sequence WKFEQDFQQL…EIKAKRIQLS (102 aa). The region spanning 495–675 is the DH domain; it reads LKNHVLNELI…LDLLKSVNDS (181 aa). The region spanning 687–809 is the PH domain; it reads NLNELGKMIM…WLKEIRNILL (123 aa).

It belongs to the MCF2 family. Interacts with an array of inositol phospholipids such as phosphatidylinositol 3-phosphate (PI3P), phosphatidylinositol 4-phosphate (PI4P) and phosphatidylinositol 5-phosphate (PI5P). May interact with CCPG1. Phosphorylation by TNK2 enhances guanine nucleotide exchange factor (GEF) activity toward Rho family proteins. As to expression, isoform 1 is expressed only in brain. Isoform 3 is expressed in heart, kidney, spleen, liver and testis. Isoform 4 is expressed in brain, heart, kidney, testis, placenta, stomach and peripheral blood. The protein is detectable in brain, heart, kidney, intestine, muscle, lung and testis.

It localises to the cytoplasm. Its subcellular location is the membrane. In terms of biological role, guanine nucleotide exchange factor (GEF) that modulates the Rho family of GTPases. Promotes the conversion of some member of the Rho family GTPase from the GDP-bound to the GTP-bound form. Isoform 1 exhibits no activity toward RHOA, RAC1 or CDC42. Isoform 2 exhibits decreased GEF activity toward CDC42. Isoform 3 exhibits a weak but significant activity toward RAC1 and CDC42. Isoform 4 exhibits significant activity toward RHOA and CDC42. The truncated DBL oncogene is active toward RHOA, RAC1 and CDC42. This Homo sapiens (Human) protein is Proto-oncogene DBL (MCF2).